We begin with the raw amino-acid sequence, 360 residues long: MSRQRCALVMAGGTGGHIFPGLAVAEALRERGWRVHWLGGKGSAARPSMESQLVPPRGFSFETIDFSGVRGKGPVTLALLPLRLLKAFWQSVQVIRRVKPDVVVGLGGYIAFPAGMMSVLLGKPLVLHEQNSVAGMVNKVLASVADRVFTAFPDVLKKAEWVGNPLRPAFTRQLDPAVRFAQRRGPLKLLVVGGSLGATALNELVPKALALIPAASRPQVIHQSGARQLEALRANYQAAGVNAELTPFIEDTAQAFADADLIICRAGASTVTEIAAVGAAALFVPFPSAVDDHQTVNAKFLVAHGGGWLVQQRDLTPSILATMLQKTERLALVQSALQAKTMQKIDATSHLVAACEELAP.

Residues 14-16, Asn-131, Arg-167, Ser-195, Ile-249, and Gln-294 contribute to the UDP-N-acetyl-alpha-D-glucosamine site; that span reads TGG.

The protein belongs to the glycosyltransferase 28 family. MurG subfamily.

The protein resides in the cell inner membrane. The enzyme catalyses di-trans,octa-cis-undecaprenyl diphospho-N-acetyl-alpha-D-muramoyl-L-alanyl-D-glutamyl-meso-2,6-diaminopimeloyl-D-alanyl-D-alanine + UDP-N-acetyl-alpha-D-glucosamine = di-trans,octa-cis-undecaprenyl diphospho-[N-acetyl-alpha-D-glucosaminyl-(1-&gt;4)]-N-acetyl-alpha-D-muramoyl-L-alanyl-D-glutamyl-meso-2,6-diaminopimeloyl-D-alanyl-D-alanine + UDP + H(+). It functions in the pathway cell wall biogenesis; peptidoglycan biosynthesis. In terms of biological role, cell wall formation. Catalyzes the transfer of a GlcNAc subunit on undecaprenyl-pyrophosphoryl-MurNAc-pentapeptide (lipid intermediate I) to form undecaprenyl-pyrophosphoryl-MurNAc-(pentapeptide)GlcNAc (lipid intermediate II). The protein is UDP-N-acetylglucosamine--N-acetylmuramyl-(pentapeptide) pyrophosphoryl-undecaprenol N-acetylglucosamine transferase of Polaromonas naphthalenivorans (strain CJ2).